Reading from the N-terminus, the 185-residue chain is Prenylated Rab acceptor protein 1 (185 aa).

Topologically, residues 1–78 are cytoplasmic; the sequence is MAAQKDQQKD…RNVEYYQSNY (78 aa). Residues 30–54 form a required for interaction with prenylated RAB3A and VAMP2 region; that stretch reads AGREWLERRRATIRPWGTFVDQQRF. The next 2 membrane-spanning stretches (helical) occupy residues 79–94 and 95–112; these read VFVFLGLILYCVVTSP and MLLVALAVFFGACYILYL. At 113–131 the chain is on the cytoplasmic side; that stretch reads RTLQSKLVLFGREVSPAHQ. The next 2 helical transmembrane spans lie at 132-148 and 149-165; these read YALAGGVSFPFFWLAGA and GSAVFWVLGATLVLIGS. The required for interaction with GDI1 stretch occupies residues 165 to 185; the sequence is SHAAFHQMEPADGEELQMEPV. Residues 166–185 are Cytoplasmic-facing; that stretch reads HAAFHQMEPADGEELQMEPV. The tract at residues 175-185 is required for interaction with prenylated RAB3A and VAMP2; that stretch reads ADGEELQMEPV. Residues 175 to 185 are homodimerization; the sequence is ADGEELQMEPV.

It belongs to the PRA1 family. In terms of assembly, homodimer. Interacts with VAMP2 (synaptobrevin-2), GDI1, NRDG1 and PCLO. Interacts with prenylated Rab proteins (including RAB5 and RAB6), and with the members of the Ras superfamily HRAS, RHOA, TC21, and RAP1A.

The protein resides in the cell membrane. Its subcellular location is the cytoplasm. The protein localises to the golgi apparatus. It is found in the cytoplasmic vesicle. It localises to the secretory vesicle. The protein resides in the synaptic vesicle. In terms of biological role, general Rab protein regulator required for vesicle formation from the Golgi complex. May control vesicle docking and fusion by mediating the action of Rab GTPases to the SNARE complexes. In addition it inhibits the removal of Rab GTPases from the membrane by GDI1. The polypeptide is Prenylated Rab acceptor protein 1 (Rabac1) (Mus musculus (Mouse)).